The following is a 433-amino-acid chain: Protein MTH1 (433 aa).

Residues 1-117 form a disordered region; it reads MFVSPPPATS…SRRSSVAESG (117 aa). The span at 9 to 47 shows a compositional bias: polar residues; it reads TSKNQVLQRRPLESTNSNHGFASSLQAIPENTMSGSDNA. Positions 48–64 are enriched in low complexity; sequence SFQSLPLSMSSSQSTTS. Residues 77-87 are compositionally biased toward basic and acidic residues; it reads YTDRARDEIKK.

It to yeast STD1/MSN3.

This is Protein MTH1 (MTH1) from Saccharomyces cerevisiae (strain ATCC 204508 / S288c) (Baker's yeast).